Consider the following 758-residue polypeptide: 5-methyltetrahydropteroyltriglutamate--homocysteine methyltransferase (758 aa).

5-methyltetrahydropteroyltri-L-glutamate-binding positions include 17 to 20 (RELK) and Lys110. L-homocysteine is bound by residues 428–430 (IGS) and Glu481. Residues 428–430 (IGS) and Glu481 contribute to the L-methionine site. 5-methyltetrahydropteroyltri-L-glutamate contacts are provided by residues 512–513 (RC) and Trp558. Asp596 is an L-homocysteine binding site. Asp596 contributes to the L-methionine binding site. Glu602 contacts 5-methyltetrahydropteroyltri-L-glutamate. Zn(2+)-binding residues include His638, Cys640, and Glu662. The active-site Proton donor is the His691. Cys723 lines the Zn(2+) pocket.

Belongs to the vitamin-B12 independent methionine synthase family. It depends on Zn(2+) as a cofactor.

The catalysed reaction is 5-methyltetrahydropteroyltri-L-glutamate + L-homocysteine = tetrahydropteroyltri-L-glutamate + L-methionine. It participates in amino-acid biosynthesis; L-methionine biosynthesis via de novo pathway; L-methionine from L-homocysteine (MetE route): step 1/1. Its function is as follows. Catalyzes the transfer of a methyl group from 5-methyltetrahydrofolate to homocysteine resulting in methionine formation. In Thermosynechococcus vestitus (strain NIES-2133 / IAM M-273 / BP-1), this protein is 5-methyltetrahydropteroyltriglutamate--homocysteine methyltransferase.